The sequence spans 233 residues: Nickel import system ATP-binding protein NikE (233 aa).

The region spanning 2–228 (IELKHVTFGY…DRHPYTKELV (227 aa)) is the ABC transporter domain. Residue 35–42 (GESGCGKS) coordinates ATP.

Belongs to the ABC transporter superfamily. The complex is composed of two ATP-binding proteins (NikD and NikE), two transmembrane proteins (NikB and NikC) and a solute-binding protein (NikA).

Its subcellular location is the cell membrane. It catalyses the reaction Ni(2+)(out) + ATP + H2O = Ni(2+)(in) + ADP + phosphate + H(+). In terms of biological role, part of the ABC transporter complex NikABCDE (Opp2) involved in nickel import. Probably responsible for energy coupling to the transport system. This chain is Nickel import system ATP-binding protein NikE, found in Staphylococcus aureus (strain MSSA476).